Reading from the N-terminus, the 595-residue chain is UvrABC system protein C (595 aa).

The region spanning 14–91 (SNPGCYLHKD…IQENMPKFNI (78 aa)) is the GIY-YIG domain. The 36-residue stretch at 196–231 (DKIVNQLKAKMKDMSDQMAFERAAEYRDLIEAVSTL) folds into the UVR domain.

The protein belongs to the UvrC family. As to quaternary structure, interacts with UvrB in an incision complex.

It is found in the cytoplasm. Its function is as follows. The UvrABC repair system catalyzes the recognition and processing of DNA lesions. UvrC both incises the 5' and 3' sides of the lesion. The N-terminal half is responsible for the 3' incision and the C-terminal half is responsible for the 5' incision. This Streptococcus thermophilus (strain ATCC BAA-491 / LMD-9) protein is UvrABC system protein C.